We begin with the raw amino-acid sequence, 353 residues long: MAHNQDASSPSGMTYRDAGVDIDAGNRLVSMIKRSVASTHRPEVRSDLGGFGALFDLDTRKYQDPVLVSATDGVGTKLKLAFLTGKHDTVGIDLVAMSVNDLVVQGAEPLFFLDYFACGKLSPETAATVVEGIATGCRAAGCALIGGETAEMPGFYTEGEYDLAGFAVGAVDKHKIIDGRHISPGDAIIGLASSGPHSNGYSLIRKLVLGQSGPGLEADFNGKPLGEVLLTPTHIYVLPLLELAKTHAIHGLVHITGGGFWENIPRILPDATGALLKRSCWQQPEVFNLLQKLGNIAEDEMLRTFNCGLGMLVIVPATQADSALAQLRAAGEQAELVGEITSCKEGDARVVIL.

Belongs to the AIR synthase family.

It localises to the cytoplasm. It catalyses the reaction 2-formamido-N(1)-(5-O-phospho-beta-D-ribosyl)acetamidine + ATP = 5-amino-1-(5-phospho-beta-D-ribosyl)imidazole + ADP + phosphate + H(+). The protein operates within purine metabolism; IMP biosynthesis via de novo pathway; 5-amino-1-(5-phospho-D-ribosyl)imidazole from N(2)-formyl-N(1)-(5-phospho-D-ribosyl)glycinamide: step 2/2. This is Phosphoribosylformylglycinamidine cyclo-ligase from Magnetococcus marinus (strain ATCC BAA-1437 / JCM 17883 / MC-1).